A 260-amino-acid polypeptide reads, in one-letter code: Carbonic anhydrase 2 (260 aa).

Serine 2 is subject to N-acetylserine. Serine 2 carries the phosphoserine modification. The Alpha-carbonic anhydrase domain maps to 3 to 259 (HHWGYGEHNG…LKNRQVRVFP (257 aa)). The active-site Proton donor/acceptor is histidine 64. Zn(2+) is bound by residues histidine 94, histidine 96, and histidine 119. Phosphoserine occurs at positions 165 and 172. 198 to 199 (TN) provides a ligand contact to substrate.

The protein belongs to the alpha-carbonic anhydrase family. Interacts with SLC4A4 and SLC26A6. Interaction with SLC4A7 regulates SLC4A7 transporter activity. Requires Zn(2+) as cofactor.

It localises to the cytoplasm. Its subcellular location is the cell membrane. The catalysed reaction is hydrogencarbonate + H(+) = CO2 + H2O. It carries out the reaction urea = cyanamide + H2O. Its activity is regulated as follows. Inhibited by acetazolamide. Functionally, catalyzes the reversible hydration of carbon dioxide. Can also hydrate cyanamide to urea. Involved in the regulation of fluid secretion into the anterior chamber of the eye. Essential for bone resorption and osteoclast differentiation. Contributes to intracellular pH regulation in the duodenal upper villous epithelium during proton-coupled peptide absorption. Stimulates the chloride-bicarbonate exchange activity of SLC26A6. The sequence is that of Carbonic anhydrase 2 (CA2) from Ovis aries (Sheep).